Consider the following 353-residue polypeptide: G-protein coupled estrogen receptor 1 (353 aa).

Residues 1-40 (MEEQTTNVIQIYVNGTEQFNASFDFNITDVKESTDTYEFY) lie on the Extracellular side of the membrane. Residues 41-61 (IIGLFLSCLYTIFLFPIGFIG) form a helical membrane-spanning segment. Topologically, residues 62–81 (NILILVVNLNHRERMTIPDL) are cytoplasmic. A helical transmembrane segment spans residues 82 to 102 (YFVNLAVADLILVADSLIEVF). The Extracellular segment spans residues 103–112 (NLNEKYYDYA). Residues 113 to 133 (VLCTFMSLFLQVNMYSSIFFL) form a helical membrane-spanning segment. A disulfide bond links Cys115 and Cys192. Topologically, residues 134–160 (TWMSFDRYVALTSSMSSSPLRTMQHAK) are cytoplasmic. Residues 161 to 181 (LSCSLIWMASILATLLPFTIV) form a helical membrane-spanning segment. At 182 to 202 (QTQHTGEVHFCFANVFEIQWL) the chain is on the extracellular side. Residues 203–223 (EVTIGFLIPFSIIGLCYSLIV) traverse the membrane as a helical segment. Topologically, residues 224 to 245 (RTLMRAQKHKGLWPRRQKALRM) are cytoplasmic. Residues 246 to 266 (IVVVVLVFFICWLPENVFISI) form a helical membrane-spanning segment. Topologically, residues 267–292 (QLLQGTADPSKRTDTTLWHDYPLTGH) are extracellular. Residues 293–313 (IVNLAAFSNSCLNPIIYSFLG) form a helical membrane-spanning segment. At 314–353 (ETFRDKLRLFIKRKASWSVVYRFCNHTLDLQIPVRSESEV) the chain is on the cytoplasmic side.

It belongs to the G-protein coupled receptor 1 family. As to quaternary structure, homodimer. Heterodimer. Expressed in brain regions that are known to control reproduction and sex behavior. Expressed in ovary, muscle and intestine. Expressed in early germ cells of the testis, including the spermatogonia, spermatocytes, and somatic cells such as Sertoli cells.

The protein localises to the nucleus. Its subcellular location is the cytoplasm. The protein resides in the perinuclear region. It localises to the cytoskeleton. It is found in the cytoplasmic vesicle membrane. The protein localises to the cell membrane. Its subcellular location is the basolateral cell membrane. The protein resides in the endoplasmic reticulum membrane. It localises to the early endosome. It is found in the recycling endosome. The protein localises to the golgi apparatus. Its subcellular location is the trans-Golgi network. The protein resides in the golgi apparatus membrane. It localises to the cell projection. It is found in the dendrite. The protein localises to the dendritic spine membrane. Its subcellular location is the axon. The protein resides in the postsynaptic density. It localises to the mitochondrion membrane. Its function is as follows. Membrane G-protein coupled estrogen receptor that binds to 17-beta-estradiol (E2) with high affinity, leading to rapid and transient activation of numerous intracellular signaling pathways. Plays a role in the embryonic development of sensory and motor neurons. Specifically induces apoptosis and reduces proliferation of brain cells. Involved in maintenance of meiotic arrest in oocytes. This Danio rerio (Zebrafish) protein is G-protein coupled estrogen receptor 1 (gper1).